A 142-amino-acid polypeptide reads, in one-letter code: Large ribosomal subunit protein uL13 (142 aa).

The protein belongs to the universal ribosomal protein uL13 family. As to quaternary structure, part of the 50S ribosomal subunit.

This protein is one of the early assembly proteins of the 50S ribosomal subunit, although it is not seen to bind rRNA by itself. It is important during the early stages of 50S assembly. The polypeptide is Large ribosomal subunit protein uL13 (Ralstonia pickettii (strain 12J)).